The chain runs to 244 residues: Large ribosomal subunit protein uL3 (244 aa).

The segment at 215–244 (KKPPRERRGFAGSSTVDPLKASKRAVAKKK) is disordered. Over residues 235–244 (ASKRAVAKKK) the composition is skewed to basic residues.

Belongs to the universal ribosomal protein uL3 family. Part of the 50S ribosomal subunit. Forms a cluster with proteins L14 and L19.

Functionally, one of the primary rRNA binding proteins, it binds directly near the 3'-end of the 23S rRNA, where it nucleates assembly of the 50S subunit. The chain is Large ribosomal subunit protein uL3 from Koribacter versatilis (strain Ellin345).